We begin with the raw amino-acid sequence, 211 residues long: Large ribosomal subunit protein bL25 (211 aa).

Residues 188-211 (APKAAKVSTDDEAAAPAEEAPAAE) form a disordered region. Residues 201-211 (AAPAEEAPAAE) show a composition bias toward low complexity.

Belongs to the bacterial ribosomal protein bL25 family. CTC subfamily. As to quaternary structure, part of the 50S ribosomal subunit; part of the 5S rRNA/L5/L18/L25 subcomplex. Contacts the 5S rRNA. Binds to the 5S rRNA independently of L5 and L18.

Its function is as follows. This is one of the proteins that binds to the 5S RNA in the ribosome where it forms part of the central protuberance. The polypeptide is Large ribosomal subunit protein bL25 (Colwellia psychrerythraea (strain 34H / ATCC BAA-681) (Vibrio psychroerythus)).